The sequence spans 300 residues: Ribosomal RNA small subunit methyltransferase H (300 aa).

S-adenosyl-L-methionine-binding positions include 46-48 (GGH), Asp-65, Phe-92, Asp-107, and Gln-114.

It belongs to the methyltransferase superfamily. RsmH family.

The protein localises to the cytoplasm. It carries out the reaction cytidine(1402) in 16S rRNA + S-adenosyl-L-methionine = N(4)-methylcytidine(1402) in 16S rRNA + S-adenosyl-L-homocysteine + H(+). In terms of biological role, specifically methylates the N4 position of cytidine in position 1402 (C1402) of 16S rRNA. This is Ribosomal RNA small subunit methyltransferase H from Prochlorococcus marinus (strain MIT 9312).